The following is a 161-amino-acid chain: Arachidonate 5-lipoxygenase-activating protein (161 aa).

Residues 1–8 (MDQETVGN) are Lumenal-facing. The helical transmembrane segment at 9–30 (VVLLAIVTLISVVQNGFFAHKV) threads the bilayer. The Cytoplasmic segment spans residues 31-52 (EHESRTQNGRSFQRTGTLAFER). The chain crosses the membrane as a helical span at residues 53–77 (VYTANQNCVDAYPTFLAVLWSAGLL). At 78–80 (CSQ) the chain is on the lumenal side. A helical transmembrane segment spans residues 81–102 (VPAAFAGLMYLLVRQKYFVGYL). Residues 103-107 (GERTQ) are Cytoplasmic-facing. Residues 108–115 (STPGYIFG) lie within the membrane without spanning it. The helical transmembrane segment at 116–128 (KRIILFLFLMSVA) threads the bilayer. The Lumenal portion of the chain corresponds to 129–161 (GIFNYYLIFFFGSDFENYIKTVTTTISPLLLIP).

It belongs to the MAPEG family. In terms of assembly, homotrimer. Interacts with LTC4S and ALOX5.

Its subcellular location is the nucleus membrane. The protein localises to the endoplasmic reticulum membrane. Required for leukotriene biosynthesis by ALOX5 (5-lipoxygenase). Anchors ALOX5 to the membrane. Binds arachidonic acid, and could play an essential role in the transfer of arachidonic acid to ALOX5. Binds to MK-886, a compound that blocks the biosynthesis of leukotrienes. The sequence is that of Arachidonate 5-lipoxygenase-activating protein (ALOX5AP) from Macaca fascicularis (Crab-eating macaque).